The sequence spans 425 residues: COP9 signalosome complex subunit 1 (425 aa).

Residues 219 to 379 form the PCI domain; it reads ASSGVPPEIY…KSKALQTLEN (161 aa).

The protein belongs to the CSN1 family. As to quaternary structure, component of the COP9 signalosome (CSN) complex.

Its subcellular location is the cytoplasm. The protein resides in the nucleus. Functionally, component of the COP9 signalosome (CSN) complex that acts as an regulator of the ubiquitin (Ubl) conjugation pathway by mediating the deneddylation of the cullin subunit of SCF-type E3 ubiquitin-protein ligase complexes. The CSN complex is involved in the regulation of the circadian clock through its control of the stability of the SCF(FWD-1) complex. The protein is COP9 signalosome complex subunit 1 (csn-1) of Neurospora crassa (strain ATCC 24698 / 74-OR23-1A / CBS 708.71 / DSM 1257 / FGSC 987).